A 275-amino-acid chain; its full sequence is Aldo-keto reductase MSMEG_2408/MSMEI_2347 (275 aa).

The active-site Proton donor is Tyr-49. Leu-189, Ile-227, Lys-229, Ser-230, Val-231, Arg-235, Ser-238, and Asn-239 together coordinate NADPH. Lys-262 is covalently cross-linked (Isoglutamyl lysine isopeptide (Lys-Gln) (interchain with Q-Cter in protein Pup)).

This sequence belongs to the aldo/keto reductase family.

In Mycolicibacterium smegmatis (strain ATCC 700084 / mc(2)155) (Mycobacterium smegmatis), this protein is Aldo-keto reductase MSMEG_2408/MSMEI_2347.